Reading from the N-terminus, the 577-residue chain is Arginine--tRNA ligase (577 aa).

A 'HIGH' region motif is present at residues 122–132 (PNVAKEMHVGH).

It belongs to the class-I aminoacyl-tRNA synthetase family. As to quaternary structure, monomer.

It is found in the cytoplasm. The enzyme catalyses tRNA(Arg) + L-arginine + ATP = L-arginyl-tRNA(Arg) + AMP + diphosphate. The protein is Arginine--tRNA ligase of Salmonella newport (strain SL254).